The sequence spans 190 residues: Superoxide dismutase [Fe] (190 aa).

Positions 27, 75, 156, and 160 each coordinate Fe cation.

Belongs to the iron/manganese superoxide dismutase family. In terms of assembly, homodimer. Fe cation serves as cofactor.

The catalysed reaction is 2 superoxide + 2 H(+) = H2O2 + O2. Functionally, destroys superoxide anion radicals which are normally produced within the cells and which are toxic to biological systems. This Entamoeba histolytica (strain ATCC 30459 / HM-1:IMSS / ABRM) protein is Superoxide dismutase [Fe] (SODB).